The sequence spans 1441 residues: Lysophospholipase NTE1 (1441 aa).

Residues 1–22 lie on the Lumenal side of the membrane; it reads MWLTSYVLPRLKNILLLQFHIT. The chain crosses the membrane as a helical span at residues 23 to 43; the sequence is LPLNYLVLLLLSTVIITYLFL. The Cytoplasmic segment spans residues 44–1441; the sequence is RTRILSNYSQ…ENMLQRRNSI (1398 aa). Disordered stretches follow at residues 154–173, 210–236, 376–445, and 551–585; these read SNPSGDAAANATAFEPPSND, THLNEGTHPSTTNNTPGPGSPNLTGEI, QDDT…NSSS, and NRTGGKMASHSKRLNGSSRSNSRTDRSESFDHFRN. Positions 376–388 are enriched in polar residues; the sequence is QDDTGSSASTIQK. Positions 572–585 are enriched in basic and acidic residues; the sequence is SRTDRSESFDHFRN. Residues 592–718 and 707–836 each bind a nucleoside 3',5'-cyclic phosphate; these read NQFS…LTNS and IYLK…VAKK. Residues 1137 to 1301 enclose the PNPLA domain; it reads LVLGGGGARG…VDNLPVTEMT (165 aa). The GXGXXG motif lies at 1141–1146; it reads GGGARG. Positions 1168 to 1172 match the GXSXG motif; the sequence is GTSIG. The Nucleophile role is filled by S1170. Catalysis depends on D1288, which acts as the Proton acceptor. The DGA/G motif lies at 1288–1290; it reads DGG.

It belongs to the NTE family.

The protein resides in the endoplasmic reticulum membrane. It carries out the reaction a 1-acyl-sn-glycero-3-phosphocholine + H2O = sn-glycerol 3-phosphocholine + a fatty acid + H(+). With respect to regulation, inhibited by organophosphorus esters. In terms of biological role, intracellular phospholipase B that catalyzes the double deacylation of phosphatidylcholine (PC) to glycerophosphocholine (GroPCho). Plays an important role in membrane lipid homeostasis. Responsible for the rapid PC turnover in response to inositol, elevated temperatures, or when choline is present in the growth medium. The polypeptide is Lysophospholipase NTE1 (NTE1) (Kluyveromyces lactis (strain ATCC 8585 / CBS 2359 / DSM 70799 / NBRC 1267 / NRRL Y-1140 / WM37) (Yeast)).